The following is a 302-amino-acid chain: MNLPIVKGEYRKDYNLKHLTWFKVGGNAEIFFKPVDSEDLASFLVQNKQKLPITTFGAGSNIIIRDGGIEGVTIKLGQNFSNIDFTDDGHLIVGSSCLNFSLAKFCQVNAISGFEFLVGIPGTIGGGVAMNAGAYGCEFKDILVRIEAIDFAGNFRTFTNEEIGFKYRGNNLPKDLIILKAVFKVNKGNSEDILARMNEINAARSSTQPIKERTGGSTFANPEGFKSWQLIDKAGLRGYRIGDASISELHCNFMINNGNATAKELEDLGNFVQQKVFEDSGIKLNWEIKRIGKVSSRGLTTG.

Positions 23–188 (KVGGNAEIFF…LKAVFKVNKG (166 aa)) constitute an FAD-binding PCMH-type domain. Residue Arg168 is part of the active site. Ser217 functions as the Proton donor in the catalytic mechanism. The active site involves Glu287.

This sequence belongs to the MurB family. Requires FAD as cofactor.

It localises to the cytoplasm. It carries out the reaction UDP-N-acetyl-alpha-D-muramate + NADP(+) = UDP-N-acetyl-3-O-(1-carboxyvinyl)-alpha-D-glucosamine + NADPH + H(+). It participates in cell wall biogenesis; peptidoglycan biosynthesis. Its function is as follows. Cell wall formation. The sequence is that of UDP-N-acetylenolpyruvoylglucosamine reductase from Rickettsia bellii (strain RML369-C).